The following is a 280-amino-acid chain: Chaperone for lacto-N-biosidase (280 aa).

An N-terminal signal peptide occupies residues 1-37 (MPRRHRFAAAIAAVAVAAVLLVTLTVAVVTHGDGAFA).

In terms of assembly, homodimer.

The protein resides in the secreted. Functionally, chaperone required for active expression of the lacto-N-biosidase LnbX. The chain is Chaperone for lacto-N-biosidase from Bifidobacterium longum subsp. longum (strain ATCC 15707 / DSM 20219 / JCM 1217 / NCTC 11818 / E194b).